The chain runs to 133 residues: Small ribosomal subunit protein uS8 (133 aa).

It belongs to the universal ribosomal protein uS8 family. In terms of assembly, part of the 30S ribosomal subunit. Contacts proteins S5 and S12.

Functionally, one of the primary rRNA binding proteins, it binds directly to 16S rRNA central domain where it helps coordinate assembly of the platform of the 30S subunit. The polypeptide is Small ribosomal subunit protein uS8 (Synechococcus sp. (strain WH7803)).